Reading from the N-terminus, the 255-residue chain is Hydroxyacylglutathione hydrolase (255 aa).

Zn(2+)-binding residues include histidine 56, histidine 58, aspartate 60, histidine 61, histidine 114, aspartate 133, and histidine 171.

This sequence belongs to the metallo-beta-lactamase superfamily. Glyoxalase II family. As to quaternary structure, monomer. Zn(2+) serves as cofactor.

It carries out the reaction an S-(2-hydroxyacyl)glutathione + H2O = a 2-hydroxy carboxylate + glutathione + H(+). It participates in secondary metabolite metabolism; methylglyoxal degradation; (R)-lactate from methylglyoxal: step 2/2. Thiolesterase that catalyzes the hydrolysis of S-D-lactoyl-glutathione to form glutathione and D-lactic acid. This chain is Hydroxyacylglutathione hydrolase, found in Nitrobacter winogradskyi (strain ATCC 25391 / DSM 10237 / CIP 104748 / NCIMB 11846 / Nb-255).